A 648-amino-acid polypeptide reads, in one-letter code: Pumilio homolog 3 (648 aa).

Positions methionine 1 to arginine 124 are disordered. The span at alanine 17–serine 27 shows a compositional bias: basic and acidic residues. Lysine 33 carries the N6-acetyllysine modification. Positions leucine 60–lysine 69 are enriched in basic residues. A compositionally biased stretch (basic and acidic residues) spans phenylalanine 94–arginine 124. The short motif at lysine 106–lysine 118 is the Nuclear localization signal element. The PUM-HD domain maps to glutamate 143 to leucine 510. 11 Pumilio repeats span residues histidine 177–alanine 212, lysine 213–histidine 248, alanine 249–glycine 277, arginine 289–histidine 325, serine 326–threonine 361, histidine 362–glycine 397, glutamine 398–aspartate 435, lysine 436–aspartate 504, lysine 505–histidine 551, proline 552–valine 596, and asparagine 597–serine 636. Residues arginine 289–valine 297 form an HA-8 region.

Interacts with PARP1 (via catalytic domain). In terms of tissue distribution, widely expressed.

The protein resides in the nucleus. Its subcellular location is the nucleolus. The protein localises to the nucleoplasm. It is found in the chromosome. In terms of biological role, inhibits the poly(ADP-ribosyl)ation activity of PARP1 and the degradation of PARP1 by CASP3 following genotoxic stress. Binds to double-stranded RNA or DNA without sequence specificity. Involved in development of the eye and of primordial germ cells. The protein is Pumilio homolog 3 of Homo sapiens (Human).